The sequence spans 363 residues: Aminomethyltransferase (363 aa).

This sequence belongs to the GcvT family. In terms of assembly, the glycine cleavage system is composed of four proteins: P, T, L and H.

The catalysed reaction is N(6)-[(R)-S(8)-aminomethyldihydrolipoyl]-L-lysyl-[protein] + (6S)-5,6,7,8-tetrahydrofolate = N(6)-[(R)-dihydrolipoyl]-L-lysyl-[protein] + (6R)-5,10-methylene-5,6,7,8-tetrahydrofolate + NH4(+). Its function is as follows. The glycine cleavage system catalyzes the degradation of glycine. This is Aminomethyltransferase from Picosynechococcus sp. (strain ATCC 27264 / PCC 7002 / PR-6) (Agmenellum quadruplicatum).